A 750-amino-acid chain; its full sequence is Penicillin-binding protein 2x (750 aa).

Residues 29–49 traverse the membrane as a helical segment; the sequence is LSLLSVFVFAIFLVNFAVIIG. Ser337 serves as the catalytic Acyl-ester intermediate. PASTA domains follow at residues 632-691 and 692-750; these read QQSP…ILSD and KAEE…TLGD.

Belongs to the transpeptidase family.

Its subcellular location is the cell membrane. Functionally, a transpeptidase that forms peptide cross-links between adjacent glycan strands in cell wall peptidoglycan (PG). Part of the divisome machinery that synthesizes the septal cross wall. Beta-lactams inactivate the PBPs by acylating an essential serine residue in the active site of these proteins. The sequence is that of Penicillin-binding protein 2x (pbpX) from Streptococcus pneumoniae serotype 4 (strain ATCC BAA-334 / TIGR4).